The sequence spans 696 residues: GPI mannosyltransferase 4 (696 aa).

6 consecutive transmembrane segments (helical) span residues 100–120, 125–142, 149–169, 185–205, 227–247, and 338–358; these read WQLE…IYTL, NDYC…RFEI, SSWI…EMAM, NTVV…ESIS, AMST…LFGA, and YVHL…ASLG.

Belongs to the glycosyltransferase 22 family. PIGZ subfamily.

The protein resides in the endoplasmic reticulum membrane. The protein operates within glycolipid biosynthesis; glycosylphosphatidylinositol-anchor biosynthesis. Its function is as follows. Mannosyltransferase involved in glycosylphosphatidylinositol-anchor biosynthesis. Transfers a fourth mannose to some trimannosyl-GPIs during GPI precursor assembly. The polypeptide is GPI mannosyltransferase 4 (Drosophila melanogaster (Fruit fly)).